The chain runs to 334 residues: Ornithine carbamoyltransferase, catabolic (334 aa).

Residues 57-60 (STRT), Q84, R108, and 135-138 (HPTQ) contribute to the carbamoyl phosphate site. L-ornithine contacts are provided by residues N169, D233, and 237–238 (SM). Carbamoyl phosphate is bound by residues 275 to 276 (CL) and R320.

The protein belongs to the aspartate/ornithine carbamoyltransferase superfamily. OTCase family.

The protein localises to the cytoplasm. It catalyses the reaction carbamoyl phosphate + L-ornithine = L-citrulline + phosphate + H(+). The protein operates within amino-acid degradation; L-arginine degradation via ADI pathway; carbamoyl phosphate from L-arginine: step 2/2. Its function is as follows. Reversibly catalyzes the transfer of the carbamoyl group from carbamoyl phosphate (CP) to the N(epsilon) atom of ornithine (ORN) to produce L-citrulline. In Salmonella typhimurium (strain LT2 / SGSC1412 / ATCC 700720), this protein is Ornithine carbamoyltransferase, catabolic (arcB).